The chain runs to 96 residues: Co-chaperonin GroES (96 aa).

The protein belongs to the GroES chaperonin family. In terms of assembly, heptamer of 7 subunits arranged in a ring. Interacts with the chaperonin GroEL.

Its subcellular location is the cytoplasm. Its function is as follows. Together with the chaperonin GroEL, plays an essential role in assisting protein folding. The GroEL-GroES system forms a nano-cage that allows encapsulation of the non-native substrate proteins and provides a physical environment optimized to promote and accelerate protein folding. GroES binds to the apical surface of the GroEL ring, thereby capping the opening of the GroEL channel. This is Co-chaperonin GroES from Leptospira interrogans serogroup Icterohaemorrhagiae serovar copenhageni (strain Fiocruz L1-130).